The chain runs to 115 residues: NADH-ubiquinone oxidoreductase chain 3 (115 aa).

At methionine 1 the chain carries N-formylmethionine. The next 3 helical transmembrane spans lie at 3 to 23, 55 to 75, and 84 to 104; these read LMLA…IAFW, FFLV…LLPL, and LNTM…SLAY.

As to quaternary structure, core subunit of respiratory chain NADH dehydrogenase (Complex I) which is composed of 45 different subunits. Interacts with TMEM186. Interacts with TMEM242.

Its subcellular location is the mitochondrion inner membrane. It catalyses the reaction a ubiquinone + NADH + 5 H(+)(in) = a ubiquinol + NAD(+) + 4 H(+)(out). Core subunit of the mitochondrial membrane respiratory chain NADH dehydrogenase (Complex I) which catalyzes electron transfer from NADH through the respiratory chain, using ubiquinone as an electron acceptor. Essential for the catalytic activity of complex I. The sequence is that of NADH-ubiquinone oxidoreductase chain 3 from Bos taurus (Bovine).